Consider the following 567-residue polypeptide: Urease subunit alpha (567 aa).

Positions Gly128 to Phe567 constitute a Urease domain. Ni(2+)-binding residues include His133, His135, and Lys216. Lys216 is modified (N6-carboxylysine). Residue His218 coordinates substrate. Positions 245 and 271 each coordinate Ni(2+). Residue His319 is the Proton donor of the active site. A Ni(2+)-binding site is contributed by Asp359.

Belongs to the metallo-dependent hydrolases superfamily. Urease alpha subunit family. As to quaternary structure, heterotrimer of UreA (gamma), UreB (beta) and UreC (alpha) subunits. Three heterotrimers associate to form the active enzyme. Ni cation serves as cofactor. In terms of processing, carboxylation allows a single lysine to coordinate two nickel ions.

It localises to the cytoplasm. It carries out the reaction urea + 2 H2O + H(+) = hydrogencarbonate + 2 NH4(+). It participates in nitrogen metabolism; urea degradation; CO(2) and NH(3) from urea (urease route): step 1/1. This Marinobacter nauticus (strain ATCC 700491 / DSM 11845 / VT8) (Marinobacter aquaeolei) protein is Urease subunit alpha.